A 350-amino-acid polypeptide reads, in one-letter code: Bifunctional UDP-glucose 4-epimerase and UDP-xylose 4-epimerase 1 (350 aa).

NAD(+) contacts are provided by residues 15 to 17, 36 to 40, 67 to 68, phenylalanine 89, and lysine 93; these read GFI, DNFDN, and DL. Substrate is bound at residue serine 133. Tyrosine 157 functions as the Proton acceptor in the catalytic mechanism. NAD(+)-binding residues include lysine 161 and tyrosine 185.

It belongs to the NAD(P)-dependent epimerase/dehydratase family. It depends on NAD(+) as a cofactor.

The catalysed reaction is UDP-alpha-D-glucose = UDP-alpha-D-galactose. The enzyme catalyses UDP-beta-L-arabinopyranose = UDP-alpha-D-xylose. It participates in carbohydrate metabolism; galactose metabolism. Its pathway is nucleotide-sugar biosynthesis; UDP-L-arabinose biosynthesis; UDP-L-arabinose from UDP-alpha-D-xylose: step 1/1. It functions in the pathway cell wall biogenesis; cell wall polysaccharide biosynthesis. Its activity is regulated as follows. Inhibited by Hg(2+). Functionally, catalyzes the interconversion between UDP-glucose and UDP-galactose and the interconversion between UDP-arabinose and UDP-xylose. In Pisum sativum (Garden pea), this protein is Bifunctional UDP-glucose 4-epimerase and UDP-xylose 4-epimerase 1.